We begin with the raw amino-acid sequence, 135 residues long: Large ribosomal subunit protein eL32 (135 aa).

This sequence belongs to the eukaryotic ribosomal protein eL32 family.

In Methanococcus maripaludis (strain C5 / ATCC BAA-1333), this protein is Large ribosomal subunit protein eL32.